The chain runs to 970 residues: UvrABC system protein A (970 aa).

34–41 (GVSGSGKS) serves as a coordination point for ATP. Residues 284–311 (CPEHGAVMDELSPRLFSFNSPYGACPDC) form a C4-type zinc finger. 2 consecutive ABC transporter domains span residues 340 to 617 (WSEK…QRSL) and 637 to 965 (GNGA…KYLA). 669 to 676 (GVSGSGKS) serves as a coordination point for ATP. A C4-type zinc finger spans residues 768–794 (CEACAGQGVNVIEMNFLPDVYVQCDVC).

Belongs to the ABC transporter superfamily. UvrA family. Forms a heterotetramer with UvrB during the search for lesions.

It localises to the cytoplasm. The UvrABC repair system catalyzes the recognition and processing of DNA lesions. UvrA is an ATPase and a DNA-binding protein. A damage recognition complex composed of 2 UvrA and 2 UvrB subunits scans DNA for abnormalities. When the presence of a lesion has been verified by UvrB, the UvrA molecules dissociate. In Synechocystis sp. (strain ATCC 27184 / PCC 6803 / Kazusa), this protein is UvrABC system protein A.